The sequence spans 838 residues: Protein translocase subunit SecA (838 aa).

ATP contacts are provided by residues Gln87, 105 to 109 (GEGKT), and Asp494. Basic and acidic residues-rich tracts occupy residues 781–790 (EQEFQHKDET) and 803–819 (EDAKKEPKRREAPKVGR). The segment at 781–838 (EQEFQHKDETANVQYSGPAESAEDAKKEPKRREAPKVGRNDPCPCGSGKKYKKCHGAK) is disordered. Residues Cys823, Cys825, Cys834, and His835 each contribute to the Zn(2+) site. A compositionally biased stretch (basic residues) spans 829–838 (KKYKKCHGAK).

This sequence belongs to the SecA family. Monomer and homodimer. Part of the essential Sec protein translocation apparatus which comprises SecA, SecYEG and auxiliary proteins SecDF-YajC and YidC. The cofactor is Zn(2+).

The protein localises to the cell inner membrane. It localises to the cytoplasm. It carries out the reaction ATP + H2O + cellular proteinSide 1 = ADP + phosphate + cellular proteinSide 2.. Its function is as follows. Part of the Sec protein translocase complex. Interacts with the SecYEG preprotein conducting channel. Has a central role in coupling the hydrolysis of ATP to the transfer of proteins into and across the cell membrane, serving as an ATP-driven molecular motor driving the stepwise translocation of polypeptide chains across the membrane. This Solidesulfovibrio magneticus (strain ATCC 700980 / DSM 13731 / RS-1) (Desulfovibrio magneticus) protein is Protein translocase subunit SecA.